The chain runs to 88 residues: Small ribosomal subunit protein bS20 (88 aa).

Belongs to the bacterial ribosomal protein bS20 family.

Binds directly to 16S ribosomal RNA. The chain is Small ribosomal subunit protein bS20 from Bartonella tribocorum (strain CIP 105476 / IBS 506).